The chain runs to 499 residues: Anaerobic magnesium-protoporphyrin IX monomethyl ester cyclase (499 aa).

The B12-binding domain occupies 9 to 145 (PHPAIGSRIP…AALENHNDLN (137 aa)). The Radical SAM core domain occupies 188–420 (YGGKQAVVIQ…PPWRIFLWVK (233 aa)). [4Fe-4S] cluster contacts are provided by Cys-202, Cys-206, and Cys-209.

Belongs to the BchE family. Requires [4Fe-4S] cluster as cofactor. The cofactor is adenosylcob(III)alamin.

The enzyme catalyses Mg-protoporphyrin IX 13-monomethyl ester + 3 S-adenosyl-L-methionine + H2O = 3,8-divinyl protochlorophyllide a + 3 5'-deoxyadenosine + 3 L-methionine + 4 H(+). It functions in the pathway porphyrin-containing compound metabolism; bacteriochlorophyll biosynthesis (light-independent). Involved in the tetrapyrrole biosynthetic pathways leading to chlorophyll and bacteriochlorophyll (BChl). Catalyzes the anaerobic formation of the isocyclic ring (E-ring) in Mg-protoporphyrin monomethyl ester (MPE) to yield protochlorophyllide a (PChlide a) via a six-electron oxidation and the formation of an oxo group at position C13 using oxygen from a water molecule. The protein is Anaerobic magnesium-protoporphyrin IX monomethyl ester cyclase of Synechocystis sp. (strain ATCC 27184 / PCC 6803 / Kazusa).